Reading from the N-terminus, the 973-residue chain is Ras-related protein Rab-44 (973 aa).

Over residues 1–21 (MEKGKGVSRKGRKLASSRRRQ) the composition is skewed to basic residues. Residues 1–42 (MEKGKGVSRKGRKLASSRRRQAREPADGQDAPVAAEAESWPS) are disordered. One can recognise an EF-hand domain in the interval 77 to 111 (GGEEPQMIFDWVDVESRGHLSLEEFSSGLKNVFGS). The interval 112-140 (SPGTHRLRTKRSLPSQRESVTSTLPVPEE) is disordered. Polar residues predominate over residues 123–135 (SLPSQRESVTSTL). Residues 219-310 (LYKVRQLYEE…ERDLAGQLEE (92 aa)) adopt a coiled-coil conformation. Disordered stretches follow at residues 319–368 (RGHL…FGNN), 421–481 (FSQE…GSFL), 493–708 (GTVE…GLAV), and 724–779 (EAQP…GKPQ). A compositionally biased stretch (pro residues) spans 428–440 (DPDPGPRGSPEVP). The span at 445–457 (KDGKGVEDPKGQD) shows a compositional bias: basic and acidic residues. Positions 513 to 524 (GLSSSPQSPAGS) are enriched in low complexity. Composition is skewed to basic and acidic residues over residues 548–559 (SLEREVMAEDLK), 598–608 (HLARQESHAKG), and 654–663 (SESHGLEARS). Residues 665 to 680 (ESPQQDDPLPNTSQPP) are compositionally biased toward polar residues. Positions 750-766 (AESRPEDPRTDLQEAER) are enriched in basic and acidic residues. GTP is bound by residues 792 to 799 (GDSNVGKT), 840 to 844 (DTAGQ), and 898 to 901 (NKMD). Residues cysteine 971 and cysteine 972 are each lipidated (S-geranylgeranyl cysteine).

It belongs to the small GTPase superfamily. Rab family.

It is found in the cell membrane. This Mus musculus (Mouse) protein is Ras-related protein Rab-44 (Rab44).